The sequence spans 1250 residues: DNA-directed RNA polymerase subunit beta'' (1250 aa).

Positions 224, 314, 321, and 324 each coordinate Zn(2+).

This sequence belongs to the RNA polymerase beta' chain family. RpoC2 subfamily. In terms of assembly, in plastids the minimal PEP RNA polymerase catalytic core is composed of four subunits: alpha, beta, beta', and beta''. When a (nuclear-encoded) sigma factor is associated with the core the holoenzyme is formed, which can initiate transcription. The cofactor is Zn(2+).

Its subcellular location is the plastid. It is found in the chloroplast. It catalyses the reaction RNA(n) + a ribonucleoside 5'-triphosphate = RNA(n+1) + diphosphate. Its function is as follows. DNA-dependent RNA polymerase catalyzes the transcription of DNA into RNA using the four ribonucleoside triphosphates as substrates. The sequence is that of DNA-directed RNA polymerase subunit beta'' from Staurastrum punctulatum (Green alga).